The chain runs to 85 residues: Acylphosphatase (85 aa).

The region spanning Ala-3 to Leu-85 is the Acylphosphatase-like domain. Residues Arg-18 and Asn-36 contribute to the active site. A disordered region spans residues Pro-66–Leu-85.

It belongs to the acylphosphatase family.

The catalysed reaction is an acyl phosphate + H2O = a carboxylate + phosphate + H(+). The sequence is that of Acylphosphatase (acyP) from Xanthomonas axonopodis pv. citri (strain 306).